Reading from the N-terminus, the 66-residue chain is Large ribosomal subunit protein bL28 (66 aa).

Residues 1–26 (MAKDAITGARTRFGNQRSHALNSSRR) are disordered. Over residues 13–25 (FGNQRSHALNSSR) the composition is skewed to polar residues.

It belongs to the bacterial ribosomal protein bL28 family.

This Leuconostoc mesenteroides subsp. mesenteroides (strain ATCC 8293 / DSM 20343 / BCRC 11652 / CCM 1803 / JCM 6124 / NCDO 523 / NBRC 100496 / NCIMB 8023 / NCTC 12954 / NRRL B-1118 / 37Y) protein is Large ribosomal subunit protein bL28.